A 43-amino-acid chain; its full sequence is Potassium channel toxin gamma-KTx 4.13 (43 aa).

4 disulfide bridges follow: Cys5-Cys23, Cys11-Cys34, Cys20-Cys39, and Cys24-Cys41.

This sequence belongs to the ergtoxin family. Gamma-KTx 4 subfamily. In terms of tissue distribution, expressed by the venom gland.

The protein resides in the secreted. Its function is as follows. Reversibly blocks Kv11/ERG potassium channels. The sequence is that of Potassium channel toxin gamma-KTx 4.13 from Centruroides noxius (Mexican scorpion).